The sequence spans 782 residues: MFPPSGSTGLIPPSHFQARPLSTLPRMAPTWLSDIPLVQPPGHQDVSERRLDTQRPQVTMWERDVSSDRQEPGRRGRSWGLEGSQALSQQAEVIARQLQELRRLEEEVRLLRETSLQQKMRLEAQAMELEALARAEKAGRAEAEGLRAALAGAEVVRKNLEEGSQRELEEVQRLHQEQLSSLTQAHEEALSSLTSKAEGLEKSLSSLETRRAGEAKELAEAQREAELLRKQLSKTQEDLEAQVTLVENLRKYVGEQVPSEVHSQTWELERQKLLETMQHLQEDRDSLQATVELLQVRVQSLTHILALQEEELTRKVQPSDSLEPEFTRKCQSLLNRWREKVFALMVQLKAQELEHSDSVKQLKGQVASLQEKVTSQSQEQAILQRSLQDKAAEVEVERMGAKGLQLELSRAQEARRRWQQQTASAEEQLRLVVNAVSSSQIWLETTMAKVEEAAAQLPSLNNRLSYAVRKVHTIRGLIARKLALAQLRQESCPLPPPVADVSLELQQLREERNRLDAELQLSARLIQQEVGRAREQGEAERQQLSKVAQQLEQELQQTQESLASLGLQLEVARQGQQESTEEAASLRQELTQQQELYGQALQEKVAEVETRLREQLSDTERRLNEARREHAKAVVSLRQIQRRAAQEKERSQELRRLQEEARKEEGQRLARRLQELERDKNLMLATLQQEGLLSRYKQQRLLTVLPSLLDKKKSVVSSPRPPECSASAPIAAAVPTRESIKGSLSVLLDDLQGLSEAISKEEAVCQGDNLDRCSSSNPQMSS.

Basic and acidic residues-rich tracts occupy residues 62 to 74 and 208 to 218; these read ERDVSSDRQEPGR and ETRRAGEAKEL. Disordered stretches follow at residues 62 to 82 and 177 to 218; these read ERDVSSDRQEPGRRGRSWGLE and EQLS…AKEL. Coiled-coil stretches lie at residues 82–314, 344–437, and 498–691; these read EGSQ…ELTR, LMVQ…NAVS, and VADV…QQEG.

Its subcellular location is the cytoplasm. It is found in the nucleus. Its function is as follows. May be a regulator of keratinocyte proliferation or differentiation. The chain is Coiled-coil alpha-helical rod protein 1 (CCHCR1) from Pan troglodytes (Chimpanzee).